Here is a 198-residue protein sequence, read N- to C-terminus: 7-methyl-GTP pyrophosphatase (198 aa).

Catalysis depends on Asp72, which acts as the Proton acceptor.

This sequence belongs to the Maf family. YceF subfamily. Requires a divalent metal cation as cofactor.

It is found in the cytoplasm. It carries out the reaction N(7)-methyl-GTP + H2O = N(7)-methyl-GMP + diphosphate + H(+). Its function is as follows. Nucleoside triphosphate pyrophosphatase that hydrolyzes 7-methyl-GTP (m(7)GTP). May have a dual role in cell division arrest and in preventing the incorporation of modified nucleotides into cellular nucleic acids. The chain is 7-methyl-GTP pyrophosphatase from Idiomarina loihiensis (strain ATCC BAA-735 / DSM 15497 / L2-TR).